The chain runs to 313 residues: Serine/threonine-protein phosphatase PP2A-4 catalytic subunit (313 aa).

Mn(2+) is bound by residues aspartate 61, histidine 63, aspartate 89, and asparagine 121. Histidine 122 functions as the Proton donor in the catalytic mechanism. Residues histidine 171 and histidine 245 each contribute to the Mn(2+) site. Residue leucine 313 is modified to Leucine methyl ester.

Belongs to the PPP phosphatase family. PP-2A subfamily. As to quaternary structure, PP2A consists of a common heterodimeric core enzyme, composed of a 36 kDa catalytic subunit (subunit C) and a 65 kDa constant regulatory subunit (subunit A), that associates with a variety of regulatory subunits such as subunits B (the R2/B/PR55/B55, R3/B''/PR72/PR130/PR59 and R5/B'/B56 families). Interacts with SIC/RON3. Mn(2+) serves as cofactor. In terms of processing, reversibly methyl esterified on Leu-313 by leucine carboxyl methyltransferase 1 (LCMT1) and pectin methylesterase 1 (PME1). Carboxyl methylation influences the affinity of the catalytic subunit for the different regulatory subunits, thereby modulating the PP2A holoenzyme's substrate specificity, enzyme activity and cellular localization. Phosphorylation of either threonine (by autophosphorylation-activated protein kinase) or tyrosine results in inactivation of the phosphatase. Auto-dephosphorylation has been suggested as a mechanism for reactivation.

The protein localises to the cytoplasm. It carries out the reaction O-phospho-L-seryl-[protein] + H2O = L-seryl-[protein] + phosphate. The enzyme catalyses O-phospho-L-threonyl-[protein] + H2O = L-threonyl-[protein] + phosphate. Its function is as follows. Functions redundantly with PP2A3, and is involved in establishing auxin gradients, apical-basal axis of polarity and root and shoot apical meristem during embryogenesis. May dephosphorylate PIN1 and regulate its subcellular distribution for polar auxin transport. The holoenzyme composed of PP2AA1, PP2A4 and B'ZETA or B'ETA acts as a negative regulator of plant innate immunity by controlling BAK1 phosphorylation state and activation in surface-localized immune receptor complexes. The chain is Serine/threonine-protein phosphatase PP2A-4 catalytic subunit from Arabidopsis thaliana (Mouse-ear cress).